The chain runs to 173 residues: Protein Rv3753c (173 aa).

This chain is Protein Rv3753c, found in Mycobacterium tuberculosis (strain ATCC 25618 / H37Rv).